The sequence spans 456 residues: High mobility group B protein 6 (456 aa).

Disordered stretches follow at residues 1-42, 117-142, 238-258, and 349-389; these read MATN…KSAK, SSLT…KRPS, AEQD…PKHP, and MLKK…YFLF. Over residues 11-21 the composition is skewed to basic residues; that stretch reads KKPRNSRKALK. Residues 138-206 constitute a DNA-binding region (HMG box 1); the sequence is TKRPSSSYVL…AYLQVIAKEK (69 aa). Residues 240–254 show a composition bias toward basic and acidic residues; that stretch reads QDNKKKNKKEKDPLK. A DNA-binding region (HMG box 2) is located at residues 255–321; the sequence is PKHPVSAFLV…TYLQAMEEYK (67 aa). Residues 354–363 show a composition bias toward basic and acidic residues; the sequence is EKTDNLIKKE. A DNA-binding region (HMG box 3) is located at residues 379–447; that stretch reads PKKPASSYFL…AYKKEVEAYN (69 aa).

It localises to the nucleus. The protein is High mobility group B protein 6 (HMGB6) of Arabidopsis thaliana (Mouse-ear cress).